Here is a 156-residue protein sequence, read N- to C-terminus: Endoribonuclease YbeY (156 aa).

Residues His122, His126, and His132 each contribute to the Zn(2+) site.

Belongs to the endoribonuclease YbeY family. Zn(2+) serves as cofactor.

The protein resides in the cytoplasm. Functionally, single strand-specific metallo-endoribonuclease involved in late-stage 70S ribosome quality control and in maturation of the 3' terminus of the 16S rRNA. The chain is Endoribonuclease YbeY from Symbiobacterium thermophilum (strain DSM 24528 / JCM 14929 / IAM 14863 / T).